The primary structure comprises 427 residues: Glutamate-1-semialdehyde 2,1-aminomutase (427 aa).

Residue K265 is modified to N6-(pyridoxal phosphate)lysine.

Belongs to the class-III pyridoxal-phosphate-dependent aminotransferase family. HemL subfamily. In terms of assembly, homodimer. It depends on pyridoxal 5'-phosphate as a cofactor.

Its subcellular location is the cytoplasm. The enzyme catalyses (S)-4-amino-5-oxopentanoate = 5-aminolevulinate. Its pathway is porphyrin-containing compound metabolism; protoporphyrin-IX biosynthesis; 5-aminolevulinate from L-glutamyl-tRNA(Glu): step 2/2. The polypeptide is Glutamate-1-semialdehyde 2,1-aminomutase (Burkholderia orbicola (strain MC0-3)).